The primary structure comprises 77 residues: Neurotoxin LmNaTx21.1 (77 aa).

A signal peptide spans 1–7 (LILVACL). An LCN-type CS-alpha/beta domain is found at 16-76 (KDGYPVDWNN…VEIKGYGRCR (61 aa)). 4 disulfides stabilise this stretch: C26/C75, C30/C51, C37/C58, and C41/C60.

The protein belongs to the long (4 C-C) scorpion toxin superfamily. Sodium channel inhibitor family. Alpha subfamily. In terms of tissue distribution, expressed by the venom gland.

Its subcellular location is the secreted. Its function is as follows. Binds voltage-independently at site-3 of voltage-gated sodium channels (Nav) and inhibits the inactivation of the activated channels, thereby blocking neuronal transmission. This Lychas mucronatus (Chinese swimming scorpion) protein is Neurotoxin LmNaTx21.1.